Here is a 94-residue protein sequence, read N- to C-terminus: Co-chaperonin GroES (94 aa).

Belongs to the GroES chaperonin family. As to quaternary structure, heptamer of 7 subunits arranged in a ring. Interacts with the chaperonin GroEL.

It localises to the cytoplasm. Functionally, together with the chaperonin GroEL, plays an essential role in assisting protein folding. The GroEL-GroES system forms a nano-cage that allows encapsulation of the non-native substrate proteins and provides a physical environment optimized to promote and accelerate protein folding. GroES binds to the apical surface of the GroEL ring, thereby capping the opening of the GroEL channel. This chain is Co-chaperonin GroES, found in Bacillus cytotoxicus (strain DSM 22905 / CIP 110041 / 391-98 / NVH 391-98).